The chain runs to 782 residues: LPS-assembly protein LptD (782 aa).

The first 23 residues, 1–23 (MNKKHTLISLAILTALYSQQSLA), serve as a signal peptide directing secretion.

This sequence belongs to the LptD family. In terms of assembly, component of the lipopolysaccharide transport and assembly complex. Interacts with LptE and LptA.

It localises to the cell outer membrane. In terms of biological role, together with LptE, is involved in the assembly of lipopolysaccharide (LPS) at the surface of the outer membrane. This chain is LPS-assembly protein LptD, found in Haemophilus influenzae (strain ATCC 51907 / DSM 11121 / KW20 / Rd).